The sequence spans 142 residues: Baculoviral IAP repeat-containing protein 5 (142 aa).

The stretch at Arg18 to Thr88 is one BIR repeat. Lys23 bears the N6-acetyllysine mark. Thr34 carries the post-translational modification Phosphothreonine; by CDK1 and CDK15. The residue at position 48 (Thr48) is a Phosphothreonine. Residues Cys57, Cys60, His77, and Cys84 each coordinate Zn(2+). N6-acetyllysine is present on residues Lys90, Lys110, Lys112, and Lys115. Residue Thr117 is modified to Phosphothreonine; by AURKB.

The protein belongs to the IAP family. In terms of assembly, monomer or homodimer. Exists as a homodimer in the apo state and as a monomer in the CPC-bound state. The monomer protects cells against apoptosis more efficiently than the dimer. Only the dimeric form is capable of enhancing tubulin stability in cells. When phosphorylated, interacts with LAMTOR5/HBXIP; the resulting complex binds pro-CASP9, as well as active CASP9, but much less efficiently. Component of the chromosomal passenger complex (CPC) composed of at least BIRC5/survivin, CDCA8/borealin, INCENP, AURKB or AURKC; in the complex forms a triple-helix bundle-based subcomplex with INCENP and CDCA8. Interacts with JTB. Interacts (via BIR domain) with histone H3 phosphorylated at 'Thr-3' (H3pT3). Interacts with EVI5. Interacts with GTP-bound RAN in both the S and M phases of the cell cycle. Interacts with USP9X. Interacts with tubulin. Interacts with BIRC2/c-IAP1. The monomeric form interacts with XIAP/BIRC4. Both the dimeric and monomeric form can interact with DIABLO/SMAC. Interacts with BIRC6/bruce. Interacts with FBXL7; this interaction facilitates the polyubiquitination and subsequent proteasomal degradation of BIRC5 by the SCF(FBXL7) E3 ubiquitin-protein ligase complex. Ubiquitinated by the Cul9-RING ubiquitin-protein ligase complex, leading to its degradation. Ubiquitination is required for centrosomal targeting. Deubiquitinated by USP35 or USP38; leading to stabilization. Post-translationally, in vitro phosphorylation at Thr-117 by AURKB prevents interaction with INCENP and localization to mitotic chromosomes. Phosphorylation at Thr-48 by CK2 is critical for its mitotic and anti-apoptotic activities. Phosphorylation at Thr-34 by CDK15 is critical for its anti-apoptotic activity.

Its subcellular location is the cytoplasm. It is found in the nucleus. The protein localises to the chromosome. The protein resides in the centromere. It localises to the cytoskeleton. Its subcellular location is the spindle. It is found in the kinetochore. The protein localises to the midbody. Multitasking protein that has dual roles in promoting cell proliferation and preventing apoptosis. Component of a chromosome passage protein complex (CPC) which is essential for chromosome alignment and segregation during mitosis and cytokinesis. Acts as an important regulator of the localization of this complex; directs CPC movement to different locations from the inner centromere during prometaphase to midbody during cytokinesis and participates in the organization of the center spindle by associating with polymerized microtubules. Involved in the recruitment of CPC to centromeres during early mitosis via association with histone H3 phosphorylated at 'Thr-3' (H3pT3) during mitosis. The complex with RAN plays a role in mitotic spindle formation by serving as a physical scaffold to help deliver the RAN effector molecule TPX2 to microtubules. May counteract a default induction of apoptosis in G2/M phase. The acetylated form represses STAT3 transactivation of target gene promoters. May play a role in neoplasia. Inhibitor of CASP3 and CASP7. Essential for the maintenance of mitochondrial integrity and function. This is Baculoviral IAP repeat-containing protein 5 (Birc5) from Rattus norvegicus (Rat).